Here is a 274-residue protein sequence, read N- to C-terminus: 2-dehydro-3-deoxyphosphooctonate aldolase (274 aa).

It belongs to the KdsA family.

It is found in the cytoplasm. The enzyme catalyses D-arabinose 5-phosphate + phosphoenolpyruvate + H2O = 3-deoxy-alpha-D-manno-2-octulosonate-8-phosphate + phosphate. The protein operates within carbohydrate biosynthesis; 3-deoxy-D-manno-octulosonate biosynthesis; 3-deoxy-D-manno-octulosonate from D-ribulose 5-phosphate: step 2/3. It functions in the pathway bacterial outer membrane biogenesis; lipopolysaccharide biosynthesis. This chain is 2-dehydro-3-deoxyphosphooctonate aldolase, found in Rickettsia typhi (strain ATCC VR-144 / Wilmington).